The following is a 373-amino-acid chain: GTPase Obg (373 aa).

The Obg domain occupies 1–158; the sequence is MFVDSVELLI…KQVRLEMKLI (158 aa). The segment at 62-83 is disordered; that stretch reads NHIKAENGRPGEGRKKYGRKGQ. A compositionally biased stretch (basic and acidic residues) spans 64–76; it reads IKAENGRPGEGRK. An OBG-type G domain is found at 159 to 362; it reads ADVGLVGYPN…LRYALGDFVK (204 aa). GTP contacts are provided by residues 165 to 172, 190 to 194, 212 to 215, 280 to 283, and 343 to 345; these read GYPNVGKS, FTTLT, DIPG, TKID, and SSV. Mg(2+)-binding residues include Ser172 and Thr192.

The protein belongs to the TRAFAC class OBG-HflX-like GTPase superfamily. OBG GTPase family. As to quaternary structure, monomer. It depends on Mg(2+) as a cofactor.

The protein localises to the cytoplasm. Its function is as follows. An essential GTPase which binds GTP, GDP and possibly (p)ppGpp with moderate affinity, with high nucleotide exchange rates and a fairly low GTP hydrolysis rate. Plays a role in control of the cell cycle, stress response, ribosome biogenesis and in those bacteria that undergo differentiation, in morphogenesis control. The chain is GTPase Obg from Sulfurovum sp. (strain NBC37-1).